A 64-amino-acid chain; its full sequence is Protein translocase subunit SecE (64 aa).

The helical transmembrane segment at 35 to 55 (LVVLGTVAFITVFFAVVDYGI) threads the bilayer.

The protein belongs to the SecE/SEC61-gamma family. In terms of assembly, component of the Sec protein translocase complex. Heterotrimer consisting of SecY, SecE and SecG subunits. The heterotrimers can form oligomers, although 1 heterotrimer is thought to be able to translocate proteins. Interacts with the ribosome. Interacts with SecDF, and other proteins may be involved. Interacts with SecA.

It localises to the cell membrane. Functionally, essential subunit of the Sec protein translocation channel SecYEG. Clamps together the 2 halves of SecY. May contact the channel plug during translocation. This is Protein translocase subunit SecE from Halalkalibacterium halodurans (strain ATCC BAA-125 / DSM 18197 / FERM 7344 / JCM 9153 / C-125) (Bacillus halodurans).